The chain runs to 368 residues: Galanin receptor type 3 (368 aa).

Residues 1–20 (MADAQNISLDSPGSVGAVAV) are Extracellular-facing. N6 carries N-linked (GlcNAc...) asparagine glycosylation. Residues 21–41 (PVVFALIFLLGTVGNGLVLAV) form a helical membrane-spanning segment. Residues 42–57 (LLQPGPSAWQEPGSTT) are Cytoplasmic-facing. Residues 58-78 (DLFILNLAVADLCFILCCVPF) form a helical membrane-spanning segment. Topologically, residues 79–96 (QATIYTLDAWLFGALVCK) are extracellular. An intrachain disulfide couples C95 to C172. A helical transmembrane segment spans residues 97–118 (AVHLLIYLTMYASSFTLAAVSV). Topologically, residues 119-138 (DRYLAVRHPLRSRALRTPRN) are cytoplasmic. Residues 139–159 (ARAAVGLVWLLAALFSAPYLS) traverse the membrane as a helical segment. The Extracellular segment spans residues 160-184 (YYGTVRYGALELCVPAWEDARRRAL). A helical membrane pass occupies residues 185-205 (DVATFAAGYLLPVAVVSLAYG). Residues 206–236 (RTLRFLWAAVGPAGAAAAEARRRATGRAGRA) lie on the Cytoplasmic side of the membrane. The chain crosses the membrane as a helical span at residues 237–257 (MLAVAALYALCWGPHHALILC). At 258–259 (FW) the chain is on the extracellular side. Residues 260-280 (YGRFAFSPATYACRLASHCLA) form a helical membrane-spanning segment. At 281–368 (YANSCLNPLV…HGGEAARGPE (88 aa)) the chain is on the cytoplasmic side. C308 carries S-palmitoyl cysteine lipidation. A disordered region spans residues 317-368 (RRALRRVRPASSGPPGCPGDARPSGRLLAGGGQGPEPREGPVHGGEAARGPE).

Belongs to the G-protein coupled receptor 1 family.

It is found in the cell membrane. Its function is as follows. Receptor for the hormone galanin. Receptor for the hormone spexin-1. The polypeptide is Galanin receptor type 3 (GALR3) (Homo sapiens (Human)).